An 887-amino-acid chain; its full sequence is ATP-dependent DNA helicase srs2 (887 aa).

One can recognise a UvrD-like helicase ATP-binding domain in the interval lysine 9–alanine 304. ATP-binding positions include glycine 33–arginine 38 and arginine 302. In terms of domain architecture, UvrD-like helicase C-terminal spans lysine 305 to glycine 597.

Belongs to the helicase family. UvrD subfamily.

It is found in the nucleus. The enzyme catalyses Couples ATP hydrolysis with the unwinding of duplex DNA by translocating in the 3'-5' direction.. It carries out the reaction ATP + H2O = ADP + phosphate + H(+). Functionally, ATP-dependent DNA helicase involved in DNA repair at least for UV-induced lesions. Also aids the recombinational repair of camptothecin-induced collapsed replication forks. The chain is ATP-dependent DNA helicase srs2 (srs2) from Schizosaccharomyces pombe (strain 972 / ATCC 24843) (Fission yeast).